A 992-amino-acid chain; its full sequence is Aminopeptidase Q (992 aa).

Over Gly2 to Arg13 the chain is Cytoplasmic. A helical; Signal-anchor for type II membrane protein membrane pass occupies residues Ala14 to Ala34. Residues Ala35 to Thr992 lie on the Extracellular side of the membrane. A disordered region spans residues Asp47 to Gly92. Asn133 carries N-linked (GlcNAc...) asparagine glycosylation. Position 241 (Glu241) interacts with substrate. N-linked (GlcNAc...) asparagine glycosylation is found at Asn262, Asn289, Asn347, and Asn361. Ser380–Asn384 contacts substrate. His416 lines the Zn(2+) pocket. The active-site Proton acceptor is Glu417. Residues His420 and Glu439 each coordinate Zn(2+). Catalysis depends on Tyr505, which acts as the Proton donor. 8 N-linked (GlcNAc...) asparagine glycosylation sites follow: Asn555, Asn584, Asn602, Asn609, Asn655, Asn811, Asn850, and Asn889.

This sequence belongs to the peptidase M1 family. The cofactor is Zn(2+). Expressed in skin. Expression levels do not differ between dark and light skin areas.

It localises to the membrane. Its function is as follows. Metalloprotease which may be important for placentation by regulating biological activity of key peptides at the embryo-maternal interface. Involved in coat pigmentation patterns. During skin development, may be required to establish the periodicity of tabby markings, initiating a pre-pattern at or before hair follicle development. The sequence is that of Aminopeptidase Q (LVRN) from Felis catus (Cat).